The sequence spans 329 residues: MSAYIIETLIKILILVAVFSALGGFATYIERKVLAYFQRRLGPCYVGPFGLLQVAADGIKLFTKEDIIPQGANKFIFTLAPIIAMVSAFVSMAPIPFFPNFTLFGYEIKPLISDINIGFLFFLAVGAAGIYAPILAGLASNNKYSLIGSARATIQLLSFEVVSTLTILAPLMVVGSLSLVEINNYQSGGFLDWLVFKQPLAFVLFLIASYAELNRTPFDLLEHEAEIVAGYCTEYSGLKWGMFFLAEYAHLFAFSFVISIVFFGGFNAWGFIPGGIAILIKAGFFVFLSMWVRATYPHVRPDQLMNMCWKIMLPLALLNIVLTGIIILI.

9 helical membrane passes run 9 to 29, 42 to 62, 75 to 95, 117 to 137, 154 to 174, 188 to 208, 238 to 258, 269 to 291, and 309 to 329; these read LIKILILVAVFSALGGFATYI, GPCYVGPFGLLQVAADGIKLF, FIFTLAPIIAMVSAFVSMAPI, IGFLFFLAVGAAGIYAPILAG, IQLLSFEVVSTLTILAPLMVV, GGFLDWLVFKQPLAFVLFLIA, LKWGMFFLAEYAHLFAFSFVI, WGFIPGGIAILIKAGFFVFLSMW, and WKIMLPLALLNIVLTGIIILI.

This sequence belongs to the complex I subunit 1 family. NDH-1 is composed of 14 different subunits. Subunits NuoA, H, J, K, L, M, N constitute the membrane sector of the complex.

It is found in the cell inner membrane. The enzyme catalyses a quinone + NADH + 5 H(+)(in) = a quinol + NAD(+) + 4 H(+)(out). NDH-1 shuttles electrons from NADH, via FMN and iron-sulfur (Fe-S) centers, to quinones in the respiratory chain. The immediate electron acceptor for the enzyme in this species is believed to be ubiquinone. Couples the redox reaction to proton translocation (for every two electrons transferred, four hydrogen ions are translocated across the cytoplasmic membrane), and thus conserves the redox energy in a proton gradient. This subunit may bind ubiquinone. The polypeptide is NADH-quinone oxidoreductase subunit H (Helicobacter pylori (strain Shi470)).